We begin with the raw amino-acid sequence, 270 residues long: Abhydrolase domain-containing protein C22H12.03 (270 aa).

Residues 21–257 (PPVLIFHGLL…CGHWVHFEKP (237 aa)) form the AB hydrolase-1 domain. Catalysis depends on charge relay system residues Ser-95, Glu-190, and His-250.

It belongs to the AB hydrolase superfamily.

The protein resides in the mitochondrion. This is Abhydrolase domain-containing protein C22H12.03 from Schizosaccharomyces pombe (strain 972 / ATCC 24843) (Fission yeast).